Here is a 329-residue protein sequence, read N- to C-terminus: Malate dehydrogenase (329 aa).

11–17 (GAAGQIA) is a binding site for NAD(+). Positions 92 and 98 each coordinate substrate. Residues Asn105, Gln112, and 129–131 (VGN) contribute to the NAD(+) site. Positions 131 and 162 each coordinate substrate. His187 functions as the Proton acceptor in the catalytic mechanism.

It belongs to the LDH/MDH superfamily. MDH type 2 family.

It catalyses the reaction (S)-malate + NAD(+) = oxaloacetate + NADH + H(+). Functionally, catalyzes the reversible oxidation of malate to oxaloacetate. The sequence is that of Malate dehydrogenase from Akkermansia muciniphila (strain ATCC BAA-835 / DSM 22959 / JCM 33894 / BCRC 81048 / CCUG 64013 / CIP 107961 / Muc).